The primary structure comprises 194 residues: Transcriptional repressor NrdR (194 aa).

A zinc finger lies at 3 to 33 (CPFCGHADDRVLDTRVQKDGSIRRRRECLEC). The ATP-cone domain maps to 48-138 (PFIIKKDGRR…VYRTFKDVQE (91 aa)). Residues 168–179 (ESEKSTNHETDS) are compositionally biased toward basic and acidic residues. The interval 168-194 (ESEKSTNHETDSKTPSPRTRPPGPLSN) is disordered. Pro residues predominate over residues 185 to 194 (RTRPPGPLSN).

It belongs to the NrdR family. Zn(2+) is required as a cofactor.

Functionally, negatively regulates transcription of bacterial ribonucleotide reductase nrd genes and operons by binding to NrdR-boxes. This Bdellovibrio bacteriovorus (strain ATCC 15356 / DSM 50701 / NCIMB 9529 / HD100) protein is Transcriptional repressor NrdR.